The primary structure comprises 260 residues: Transmembrane protein 106C (260 aa).

G2 carries the N-myristoyl glycine lipid modification. Residues 85 to 105 (YVLLSVLLCLLASGLVFFFLF) form a helical membrane-spanning segment. N171 carries N-linked (GlcNAc...) asparagine glycosylation. Residues 196–216 (SYVYFYCTLPAILVHNIVIFM) traverse the membrane as a helical segment.

Belongs to the TMEM106 family. Interacts with TMEM106B.

Its subcellular location is the endoplasmic reticulum membrane. It localises to the membrane. This chain is Transmembrane protein 106C (Tmem106c), found in Rattus norvegicus (Rat).